A 434-amino-acid chain; its full sequence is T-box transcription factor T homolog (434 aa).

Positions 50-220 (LWKKFHKLTN…YNPFAKAFLD (171 aa)) form a DNA-binding region, T-box. 2 stretches are compositionally biased toward polar residues: residues 355–364 (SGFSHVSSPQ) and 376–385 (HPTSSHQHNL). A disordered region spans residues 355–385 (SGFSHVSSPQSPLPTGLFRNPHPTSSHQHNL).

In terms of tissue distribution, in the developing embryo, expressed in the mesenchyme founder cells, vegetal plate of the mesenchyme blastula, extending tip of the invaginating archenteron and, later, in the secondary mesenchyme cells.

The protein resides in the nucleus. Functionally, involved in the transcriptional regulation of genes required for mesoderm differentiation. This is T-box transcription factor T homolog from Hemicentrotus pulcherrimus (Sea urchin).